The following is a 287-amino-acid chain: Lactamase-like protein nscB (287 aa).

Residues His-62, His-64, Asp-66, and His-67 each contribute to the Zn(2+) site. Asp-66 functions as the Proton donor/acceptor in the catalytic mechanism.

It belongs to the metallo-beta-lactamase superfamily. It depends on Zn(2+) as a cofactor.

It participates in secondary metabolite biosynthesis. In terms of biological role, lactamase-like protein; part of the gene cluster that mediates the biosynthesis of neosartoricin B, a prenylated anthracenone that probably exhibits T-cell antiproliferative activity, suggestive of a physiological role as an immunosuppressive agent. The non-reducing polyketide synthase nscA probably synthesizes and cyclizes the decaketide backbone. The hydrolase nscB then mediates the product release through hydrolysis followed by spontaneous decarboxylation. The prenyltransferase nscD catalyzes the addition of the dimethylallyl group to the aromatic C5. The FAD-dependent monooxygenase nscC is then responsible for the stereospecific hydroxylation at C2. Neosartoricin B can be converted into two additional compounds neosartoricins C and D. Neosartoricin C is a spirocyclic compound that is cyclized through the attack of C3 hydroxyl on C14, followed by dehydration. On the other hand, neosartoricin D is a further cyclized compound in which attack of C2 on C14 in neosartoricin C results in the formation of the acetal-containing dioxabicyclo-octanone ring. Both of these compounds are novel and possibly represent related metabolites of the gene cluster. The sequence is that of Lactamase-like protein nscB from Trichophyton verrucosum (strain HKI 0517).